The sequence spans 253 residues: Methionine-R-sulfoxide reductase B3, mitochondrial (253 aa).

The N-terminal stretch at 1-56 (MPPAAPSVARSREGGGIGQRRLVFPKSARRTLPCPIALCLGLCLAAAAATTTRASA) is a signal peptide. Lysine 102 is subject to N6-acetyllysine. The 123-residue stretch at 107-229 (QQELRKRLTP…NSASLSFTPA (123 aa)) folds into the MsrB domain. Zn(2+) is bound by residues cysteine 146, cysteine 149, cysteine 195, and cysteine 198. Residue cysteine 218 is the Nucleophile of the active site. The tract at residues 227–253 (TPADSSEAEGSGIKESGSPAAADRAEL) is disordered. Serine 244 is modified (phosphoserine). The short motif at 250 to 253 (RAEL) is the Endoplasmic reticulum retention signal element.

The protein belongs to the MsrB Met sulfoxide reductase family. In terms of assembly, monomer. Zn(2+) serves as cofactor. Widely expressed. Detected in the sensory epithelia of the organ of Corti and vestibular end organs as early as P2 up to adulthood (at protein level). In the organ of Corti, present in inner and outer hair cells and, to a lesser extent, in supporting cells (at protein level). In hair cells, distributed throughout the cell body. Barely detectable level in stereocilia. Also observed in spiral ganglion neurons, but not in the stria vascularis. In the vestibular end organs, found throughout the sensory epithelium, but more intense expression in hair cells than in supporting cells (at protein level). In vestibular hair cells, present within cell bodies and to a lesser extent in kinocilia. Barely detectable in stereocilia.

It is found in the endoplasmic reticulum. The catalysed reaction is L-methionyl-[protein] + [thioredoxin]-disulfide + H2O = L-methionyl-(R)-S-oxide-[protein] + [thioredoxin]-dithiol. It carries out the reaction [thioredoxin]-disulfide + L-methionine + H2O = L-methionine (R)-S-oxide + [thioredoxin]-dithiol. Its function is as follows. Catalyzes the reduction of free and protein-bound methionine sulfoxide to methionine. This chain is Methionine-R-sulfoxide reductase B3, mitochondrial (Msrb3), found in Mus musculus (Mouse).